A 413-amino-acid polypeptide reads, in one-letter code: Arginine biosynthesis bifunctional protein ArgJ (413 aa).

Substrate-binding residues include Thr163, Lys189, Thr200, Glu286, Asn408, and Thr413. Residue Thr200 is the Nucleophile of the active site.

Belongs to the ArgJ family. Heterotetramer of two alpha and two beta chains.

Its subcellular location is the cytoplasm. The catalysed reaction is N(2)-acetyl-L-ornithine + L-glutamate = N-acetyl-L-glutamate + L-ornithine. It carries out the reaction L-glutamate + acetyl-CoA = N-acetyl-L-glutamate + CoA + H(+). It functions in the pathway amino-acid biosynthesis; L-arginine biosynthesis; L-ornithine and N-acetyl-L-glutamate from L-glutamate and N(2)-acetyl-L-ornithine (cyclic): step 1/1. Its pathway is amino-acid biosynthesis; L-arginine biosynthesis; N(2)-acetyl-L-ornithine from L-glutamate: step 1/4. In terms of biological role, catalyzes two activities which are involved in the cyclic version of arginine biosynthesis: the synthesis of N-acetylglutamate from glutamate and acetyl-CoA as the acetyl donor, and of ornithine by transacetylation between N(2)-acetylornithine and glutamate. In Staphylococcus aureus (strain Mu50 / ATCC 700699), this protein is Arginine biosynthesis bifunctional protein ArgJ.